The following is a 248-amino-acid chain: Conoporin-Cn1 (248 aa).

The first 23 residues, 1 to 23, serve as a signal peptide directing secretion; the sequence is MGVQFPALKTMVTVFLLLMGNMS. An N-terminal region region spans residues 45–64; that stretch reads TPGSSLYGVALKDLADTSYN. G120, S138, P140, Y167, and Y171 together coordinate phosphocholine.

This sequence belongs to the actinoporin family. Conoidea subfamily. Octamer or nonamer in membranes. Monomer in the soluble state. 9 isoforms are detected in the injectable venom, mainly corresponding to different oxidative states. Expressed by the venom duct.

The protein resides in the secreted. It is found in the nematocyst. The protein localises to the target cell membrane. Its function is as follows. Pore-forming protein that forms pores of around 1 nm and causes cardiac stimulation and cytolysis. The polypeptide is Conoporin-Cn1 (Conus consors (Singed cone)).